We begin with the raw amino-acid sequence, 932 residues long: Protein translocase subunit SecA (932 aa).

Residues Q87, 105–109 (GEGKT), and D515 contribute to the ATP site. C916, C918, C927, and H928 together coordinate Zn(2+).

The protein belongs to the SecA family. In terms of assembly, monomer and homodimer. Part of the essential Sec protein translocation apparatus which comprises SecA, SecYEG and auxiliary proteins SecDF-YajC and YidC. Zn(2+) serves as cofactor.

It localises to the cell inner membrane. Its subcellular location is the cytoplasm. It catalyses the reaction ATP + H2O + cellular proteinSide 1 = ADP + phosphate + cellular proteinSide 2.. Part of the Sec protein translocase complex. Interacts with the SecYEG preprotein conducting channel. Has a central role in coupling the hydrolysis of ATP to the transfer of proteins into and across the cell membrane, serving both as a receptor for the preprotein-SecB complex and as an ATP-driven molecular motor driving the stepwise translocation of polypeptide chains across the membrane. The protein is Protein translocase subunit SecA of Burkholderia orbicola (strain AU 1054).